Here is a 98-residue protein sequence, read N- to C-terminus: Small ribosomal subunit protein eS24 (98 aa).

The segment at 76 to 98 is disordered; that stretch reads GRQRTERSYLLNRGEPKKEEEEA. Basic and acidic residues predominate over residues 89–98; that stretch reads GEPKKEEEEA.

It belongs to the eukaryotic ribosomal protein eS24 family.

In Methanosphaerula palustris (strain ATCC BAA-1556 / DSM 19958 / E1-9c), this protein is Small ribosomal subunit protein eS24.